Here is a 507-residue protein sequence, read N- to C-terminus: Maturase K (507 aa).

Belongs to the intron maturase 2 family. MatK subfamily.

It localises to the plastid. It is found in the chloroplast. Its function is as follows. Usually encoded in the trnK tRNA gene intron. Probably assists in splicing its own and other chloroplast group II introns. This Robinia pseudoacacia (Black locust) protein is Maturase K.